We begin with the raw amino-acid sequence, 114 residues long: Beta-microseminoprotein J1 (114 aa).

Residues 1–20 (MNVLLGGLVIFATFVTLCNA) form the signal peptide. Disulfide bonds link cysteine 22/cysteine 70, cysteine 38/cysteine 62, cysteine 57/cysteine 93, cysteine 60/cysteine 69, and cysteine 84/cysteine 107.

The protein belongs to the beta-microseminoprotein family.

It localises to the secreted. The chain is Beta-microseminoprotein J1 (MSPJ) from Saguinus oedipus (Cotton-top tamarin).